A 298-amino-acid polypeptide reads, in one-letter code: MPTRMITNDEVTLWSEGLGDPADAPLLLIAGGNLSAKSWPDEFVERLVAAGHFVIRYDHRDTGRSSRCDFALHPYGFDELAADALAVLDGWQVRAAHVVGMSLGNTIGQLLALDAPERLLTLTVMLGGALDVDFDADLEAALKGEPSVSGLPVPSQRFLDMMTMLQQPAETDEELLERRVEKWRLLNGEGVPFDADEFRRRELLAAGHAGTFDEPIVHHMIPLPPVSRGAELSRVTTPVLAIQAMCDPAAPPPHARHLANRIPGARVVEIENMGHALPLAVHEPLAAAICAHTRAATV.

The AB hydrolase-1 domain occupies 25–277; it reads PLLLIAGGNL…VEIENMGHAL (253 aa).

This sequence belongs to the methyl esterase DnrP family.

The catalysed reaction is rhodomycin D + H2O = 10-carboxy-13-deoxycarminomycin + methanol + H(+). The enzyme catalyses 4-O-methylrhodomycin D + H2O = 10-carboxy-13-deoxydaunorubicin + methanol + H(+). Its pathway is antibiotic biosynthesis; daunorubicin biosynthesis. It participates in antibiotic biosynthesis; carminomycin biosynthesis. Involved in the biosynthesis of the anthracyclines carminomycin and daunorubicin (daunomycin) which are aromatic polyketide antibiotics that exhibit high cytotoxicity and are widely applied in the chemotherapy of a variety of cancers. Catalyzes the removal of methyl group from the carbomethoxy group of rhodomycin D (10-carbomethoxy-13-deoxycarminomycin) and 4-O-methylrhodomycin D to yield 10-carboxy-13-deoxycarminomycin and 10-carboxy-13-deoxydaunorubicin, respectively. Could be also involved in the decarboxylation of 10-carboxy-13-deoxycarminomycin and 10-carboxy-13-deoxydaunorubicin to yield 13-deoxycarminomycin and 13-deoxydaunorubicin, respectively. It seems that DnrK may influence the ability of DnrP to carry out the decarboxylation. The chain is Rhodomycin D methylesterase DnrP (dnrP) from Streptomyces peucetius.